A 239-amino-acid polypeptide reads, in one-letter code: tRNA (guanine-N(7)-)-methyltransferase (239 aa).

S-adenosyl-L-methionine is bound by residues Glu-69, Glu-94, Asp-121, and Asp-144. The active site involves Asp-144. Lys-148 serves as a coordination point for substrate. The tract at residues 150-155 is interaction with RNA; it reads RHNKRR. Residues Asp-180 and 217-220 each bind substrate; that span reads TKFE.

It belongs to the class I-like SAM-binding methyltransferase superfamily. TrmB family. Monomer.

It carries out the reaction guanosine(46) in tRNA + S-adenosyl-L-methionine = N(7)-methylguanosine(46) in tRNA + S-adenosyl-L-homocysteine. It participates in tRNA modification; N(7)-methylguanine-tRNA biosynthesis. In terms of biological role, catalyzes the formation of N(7)-methylguanine at position 46 (m7G46) in tRNA. This is tRNA (guanine-N(7)-)-methyltransferase from Yersinia pseudotuberculosis serotype I (strain IP32953).